A 354-amino-acid polypeptide reads, in one-letter code: Heme A synthase (354 aa).

The next 8 helical transmembrane spans lie at 21 to 41 (VAVWLLACCFMVAVMVLLGGL), 106 to 126 (VWGRLIGVVFGLPFLWLALSG), 139 to 159 (VFLLGAAQGGMGWFMVKSGLV), 171 to 191 (AHLALAFLIHGWMFWLALDIL), 212 to 232 (MLGLTGLVIVTLLFGGLVAGL), 268 to 288 (VQFGHRTLAEITIVVALVGWF), 304 to 324 (AVGLMALLQVGLGIGTLVMVV), and 326 to 346 (VWLASAHQMGAMALLTLCLWA). H272 contacts heme. H332 provides a ligand contact to heme.

Belongs to the COX15/CtaA family. Type 2 subfamily. In terms of assembly, interacts with CtaB. Heme b is required as a cofactor.

It localises to the cell membrane. It carries out the reaction Fe(II)-heme o + 2 A + H2O = Fe(II)-heme a + 2 AH2. It functions in the pathway porphyrin-containing compound metabolism; heme A biosynthesis; heme A from heme O: step 1/1. In terms of biological role, catalyzes the conversion of heme O to heme A by two successive hydroxylations of the methyl group at C8. The first hydroxylation forms heme I, the second hydroxylation results in an unstable dihydroxymethyl group, which spontaneously dehydrates, resulting in the formyl group of heme A. This Paramagnetospirillum magneticum (strain ATCC 700264 / AMB-1) (Magnetospirillum magneticum) protein is Heme A synthase.